Here is a 363-residue protein sequence, read N- to C-terminus: NAD-dependent epimerase/dehydratase tndE (363 aa).

The helical transmembrane segment at G10–I30 threads the bilayer. Residue Y176 coordinates NADP(+).

This sequence belongs to the NAD(P)-dependent epimerase/dehydratase family. Dihydroflavonol-4-reductase subfamily.

The protein localises to the membrane. The protein operates within secondary metabolite biosynthesis; terpenoid biosynthesis. NAD-dependent epimerase/dehydratase; part of the gene cluster that mediates the biosynthesis of talaronoid C, a fusicoccane diterpenoid with an unprecedented tricyclic 5/8/6 ring system. The first step in the pathway is performed by the fusicoccadiene synthase tndC that possesses both prenyl transferase and terpene cyclase activity, converting isopentenyl diphosphate and dimethylallyl diphosphate into geranylgeranyl diphosphate (GGDP) and further converting GGDP into talarodiene, a precursor for talaronoid C. The remaining enzymes from the cluster include the cytochrome P450 monooxygenase tndB, the aldehyde reductase tndE and the alcohol dehydrogenase tndF that are involved in the conversion of talarodiene into talaronoid C. The chain is NAD-dependent epimerase/dehydratase tndE from Aspergillus flavipes.